A 315-amino-acid polypeptide reads, in one-letter code: Replication factor C small subunit (315 aa).

43–50 (GSPGVGKT) serves as a coordination point for ATP.

It belongs to the activator 1 small subunits family. RfcS subfamily. Heteromultimer composed of small subunits (RfcS) and large subunits (RfcL).

Part of the RFC clamp loader complex which loads the PCNA sliding clamp onto DNA. The polypeptide is Replication factor C small subunit (Methanococcus maripaludis (strain C7 / ATCC BAA-1331)).